The sequence spans 446 residues: Phosphoglucosamine mutase (446 aa).

Catalysis depends on S99, which acts as the Phosphoserine intermediate. Mg(2+) is bound by residues S99, D242, D244, and D246. Phosphoserine is present on S99.

It belongs to the phosphohexose mutase family. Mg(2+) is required as a cofactor. Post-translationally, activated by phosphorylation.

It carries out the reaction alpha-D-glucosamine 1-phosphate = D-glucosamine 6-phosphate. Catalyzes the conversion of glucosamine-6-phosphate to glucosamine-1-phosphate. This Wolinella succinogenes (strain ATCC 29543 / DSM 1740 / CCUG 13145 / JCM 31913 / LMG 7466 / NCTC 11488 / FDC 602W) (Vibrio succinogenes) protein is Phosphoglucosamine mutase.